Here is a 281-residue protein sequence, read N- to C-terminus: 4-diphosphocytidyl-2-C-methyl-D-erythritol kinase (281 aa).

Residue lysine 15 is part of the active site. Position 98–108 (98–108) interacts with ATP; it reads PTGAGLGGGSS. Residue aspartate 140 is part of the active site.

Belongs to the GHMP kinase family. IspE subfamily.

It carries out the reaction 4-CDP-2-C-methyl-D-erythritol + ATP = 4-CDP-2-C-methyl-D-erythritol 2-phosphate + ADP + H(+). It participates in isoprenoid biosynthesis; isopentenyl diphosphate biosynthesis via DXP pathway; isopentenyl diphosphate from 1-deoxy-D-xylulose 5-phosphate: step 3/6. Functionally, catalyzes the phosphorylation of the position 2 hydroxy group of 4-diphosphocytidyl-2C-methyl-D-erythritol. This is 4-diphosphocytidyl-2-C-methyl-D-erythritol kinase from Neisseria gonorrhoeae (strain NCCP11945).